Consider the following 158-residue polypeptide: Secreted RxLR effector protein 131 (158 aa).

The signal sequence occupies residues Met1–Gly20. Positions Arg39–Arg57 match the RxLR-dEER motif. Residues Lys120 to Glu158 are host BKI1-binding. Residues Ala127 to Ile147 traverse the membrane as a helical segment. The N-linked (GlcNAc...) asparagine glycan is linked to Asn150.

The protein belongs to the RxLR effector family. As to quaternary structure, interacts with host BKI1.

The protein localises to the secreted. Its subcellular location is the host cell membrane. Functionally, secreted effector that suppresses pathogen-associated molecular pattern (PAMP)-triggered immunity (PTI) in host plants. Suppresses both defense-related brassinosteroid (BR) and ERECTA (ER) signaling pathways in planta by interacting with host BRI1 kinase inhibitor 1 (BKI1) at the host plasma membrane, leading to a host dwarf phenotype. This chain is Secreted RxLR effector protein 131, found in Plasmopara viticola (Downy mildew of grapevine).